We begin with the raw amino-acid sequence, 238 residues long: Ribonuclease 3 (238 aa).

Positions 4–134 constitute an RNase III domain; the sequence is PRQALLDAFG…LLGAIYLHHG (131 aa). A Mg(2+)-binding site is contributed by glutamate 44. The active site involves aspartate 48. Residues aspartate 120 and glutamate 123 each coordinate Mg(2+). Glutamate 123 is a catalytic residue. The DRBM domain occupies 161–229; the sequence is DWKTSLQELT…ASAAWKALDV (69 aa).

Belongs to the ribonuclease III family. As to quaternary structure, homodimer. The cofactor is Mg(2+).

Its subcellular location is the cytoplasm. The catalysed reaction is Endonucleolytic cleavage to 5'-phosphomonoester.. Functionally, digests double-stranded RNA. Involved in the processing of primary rRNA transcript to yield the immediate precursors to the large and small rRNAs (23S and 16S). Processes some mRNAs, and tRNAs when they are encoded in the rRNA operon. Processes pre-crRNA and tracrRNA of type II CRISPR loci if present in the organism. The chain is Ribonuclease 3 from Mycobacterium leprae (strain TN).